Consider the following 515-residue polypeptide: MAISKVWISLLLALAVVLSAPAARAEEAAAAEEAAAAPEAVLTLHADNFDDAIAKHPFILVEFYAPWCGHCKSLAPEYEKAAQLLSKHDPAIVLAKVDANDEKNKPLAGKYEVQGFPTLKIFRSGGKNIQEYKGPREAEGIVEYLKKQVGPASKEIKAPEDATYLEDGKIHIVGVFTEFSGTEFTNFLELAEKLRSDYDFGHTVHANHLPRGDAAVERPLVRLFKPFDELVVDSKDFDVSALEKFIDASSTPKVVTFDKNPDNHPYLLKYFQSNAPKAMLFLNFSTGPFESFKSAYYGAVEEFSGKDVKFLIGDIEASQGAFQYNGLKEDQAPLILIQDSDSKKFLKEQVEAGQIVAWLKDYFDGKLTPFRKSEPIPEANNEPVKVVVADNIHDVVFKSAKNVLIEFYAPWCGHCKKLAPILDEAAATLQSEEDVVIAKIDATANDVPGEFDVQGYPTLYFVTPSGKKVSYEGGRTADEIVDYIKKNKETAGQAAAAATEKAAEPAATEPLKDEL.

Positions 1-25 (MAISKVWISLLLALAVVLSAPAARA) are cleaved as a signal peptide. One can recognise a Thioredoxin 1 domain in the interval 26–150 (EEAAAAEEAA…IVEYLKKQVG (125 aa)). Residues Cys68 and Cys71 each act as nucleophile in the active site. A disulfide bond links Cys68 and Cys71. N-linked (GlcNAc...) asparagine glycosylation occurs at Asn283. One can recognise a Thioredoxin 2 domain in the interval 346-489 (LKEQVEAGQI…IVDYIKKNKE (144 aa)). Active-site nucleophile residues include Cys412 and Cys415. A disulfide bridge connects residues Cys412 and Cys415. Residues 494-509 (AAAAATEKAAEPAATE) show a composition bias toward low complexity. The tract at residues 494–515 (AAAAATEKAAEPAATEPLKDEL) is disordered. Residues 512–515 (KDEL) carry the Prevents secretion from ER motif.

This sequence belongs to the protein disulfide isomerase family.

It is found in the endoplasmic reticulum lumen. It carries out the reaction Catalyzes the rearrangement of -S-S- bonds in proteins.. In terms of biological role, participates in the folding of proteins containing disulfide bonds, may be involved in glycosylation, prolyl hydroxylation and triglyceride transfer. The chain is Protein disulfide-isomerase (PDI) from Triticum aestivum (Wheat).